The chain runs to 428 residues: Enolase (428 aa).

A (2R)-2-phosphoglycerate-binding site is contributed by Gln-163. The active-site Proton donor is the Glu-205. Mg(2+) is bound by residues Asp-242, Glu-284, and Asp-311. Residues Lys-336, Arg-365, Ser-366, and Lys-387 each contribute to the (2R)-2-phosphoglycerate site. Lys-336 (proton acceptor) is an active-site residue.

The protein belongs to the enolase family. It depends on Mg(2+) as a cofactor.

Its subcellular location is the cytoplasm. The protein resides in the secreted. The protein localises to the cell surface. The catalysed reaction is (2R)-2-phosphoglycerate = phosphoenolpyruvate + H2O. The protein operates within carbohydrate degradation; glycolysis; pyruvate from D-glyceraldehyde 3-phosphate: step 4/5. Functionally, catalyzes the reversible conversion of 2-phosphoglycerate (2-PG) into phosphoenolpyruvate (PEP). It is essential for the degradation of carbohydrates via glycolysis. This Tropheryma whipplei (strain TW08/27) (Whipple's bacillus) protein is Enolase.